Reading from the N-terminus, the 115-residue chain is Transcriptional regulator protein FixT (115 aa).

As to quaternary structure, interacts directly with FixL.

Functionally, prevents transcription of the intermediate key regulatory genes nifA and fixK by counteracting the activity of the FixLJ two-component system. Acts as an inhibitor of the sensor hemoprotein kinase fixL, preventing the production or the accumulation of its phosphorylated form. This Rhizobium meliloti (strain 1021) (Ensifer meliloti) protein is Transcriptional regulator protein FixT (fixT).